The chain runs to 397 residues: Ornithine aminotransferase (397 aa).

Position 255 is an N6-(pyridoxal phosphate)lysine (K255).

It belongs to the class-III pyridoxal-phosphate-dependent aminotransferase family. OAT subfamily. It depends on pyridoxal 5'-phosphate as a cofactor.

Its subcellular location is the cytoplasm. The catalysed reaction is a 2-oxocarboxylate + L-ornithine = L-glutamate 5-semialdehyde + an L-alpha-amino acid. The protein operates within amino-acid biosynthesis; L-proline biosynthesis; L-glutamate 5-semialdehyde from L-ornithine: step 1/1. Functionally, catalyzes the interconversion of ornithine to glutamate semialdehyde. The sequence is that of Ornithine aminotransferase from Macrococcus caseolyticus (strain JCSC5402) (Macrococcoides caseolyticum).